Here is a 470-residue protein sequence, read N- to C-terminus: MIDKKVIVIGAGLAGSEAAWQVANAGVPVKLVEMRPFKSTPAHHTGEFGELVCSNSFGALNPDRAAGLLQKELRIFKSLIIQTADKFAVPAGGALAVDRSKFSMALTEALSSHPLIEIERFEQLDLPRKEKITILATGPLTSDELSYKIQAFTGIDACHFFDAASPIIYGDSIDQEIVFKASRYDKGDPAYLNCPMDKNNYIHFRNQLIEGEQANLKDFEKESANFFEACLPIEEIARRGVDTMRFGPLKSIGLWNPKWGDLFDRENRLKKRPYAIVQLRKEDLEGKLLNMVGFQTNLKWSEQKRIFRMIPGLEKAEFVRFGVMHRNTFLESPNLLLPTLQFMKRNNLFAAGQITGTEGYAAAAAGGLLAGINASLLAKGKKTVSFPKESMIGSLINFISNKNQILSNQKKNKFQPMPASFGLVPELTKRIKDKRLRYKAYQERSTEALNDFKNKLDYCFEKDHLLSKIY.

10–15 (GAGLAG) provides a ligand contact to FAD.

The protein belongs to the MnmG family. TrmFO subfamily. Requires FAD as cofactor.

Its subcellular location is the cytoplasm. The catalysed reaction is uridine(54) in tRNA + (6R)-5,10-methylene-5,6,7,8-tetrahydrofolate + NADH + H(+) = 5-methyluridine(54) in tRNA + (6S)-5,6,7,8-tetrahydrofolate + NAD(+). It carries out the reaction uridine(54) in tRNA + (6R)-5,10-methylene-5,6,7,8-tetrahydrofolate + NADPH + H(+) = 5-methyluridine(54) in tRNA + (6S)-5,6,7,8-tetrahydrofolate + NADP(+). Its function is as follows. Catalyzes the folate-dependent formation of 5-methyl-uridine at position 54 (M-5-U54) in all tRNAs. In Prochlorococcus marinus (strain MIT 9215), this protein is Methylenetetrahydrofolate--tRNA-(uracil-5-)-methyltransferase TrmFO.